A 478-amino-acid polypeptide reads, in one-letter code: Calcium/calmodulin-dependent protein kinase type II subunit alpha (478 aa).

Phosphotyrosine is present on Y13. The 259-residue stretch at Y13 to I271 folds into the Protein kinase domain. Residues L19–V27 and K42 contribute to the ATP site. Residue D135 is the Proton acceptor of the active site. Position 257 is a phosphoserine (S257). T286 carries the post-translational modification Phosphothreonine; by autocatalysis. A calmodulin-binding region spans residues L290–K300. The segment at T310–G320 is interaction with BAALC. A disordered region spans residues S314–E341. A compositionally biased stretch (basic and acidic residues) spans K322 to S331. S330, S331, and S333 each carry phosphoserine. T336 and T337 each carry phosphothreonine. S404 bears the Phosphoserine mark.

The protein belongs to the protein kinase superfamily. CAMK Ser/Thr protein kinase family. CaMK subfamily. As to quaternary structure, there are 4 genes encoding calcium/calmodulin-dependent protein kinase type II chains: CAMK2A, CAMK2B, CAMK2G and CAMK2D. The corresponding proteins assemble into homo- or heteromultimeric holoenzymes composed of 12 subunits with two hexameric rings stacked one on top of the other. Interacts with BAALC. Interacts with MPDZ. Interacts with SYN1. Interacts with CAMK2N2. Interacts with SYNGAP1. Interacts with SYNPO2. Interacts with SHANK3. Interacts with GRIN2B. Interacts with CACNB2. Interacts with LRRC7. Interacts with GRM5. Interacts with DAGLA (via C-terminal); this interaction is enhanced by autophosphorylation of CAMK2A at Thr-286. Interacts with CAMK2N1; this interaction requires CAMK2A activation by Ca(2+). Mg(2+) is required as a cofactor. In terms of processing, autophosphorylation of Thr-286 following activation by Ca(2+)/calmodulin. Phosphorylation of Thr-286 locks the kinase into an activated state. Post-translationally, palmitoylated. Probably palmitoylated by ZDHHC3 and ZDHHC7. In terms of tissue distribution, expressed in brain. Expressed in skeletal muscle.

The protein localises to the cytoplasm. The protein resides in the synapse. It localises to the postsynaptic density. Its subcellular location is the cell projection. It is found in the dendritic spine. The protein localises to the dendrite. The enzyme catalyses L-seryl-[protein] + ATP = O-phospho-L-seryl-[protein] + ADP + H(+). It catalyses the reaction L-threonyl-[protein] + ATP = O-phospho-L-threonyl-[protein] + ADP + H(+). Activated by Ca(2+)/calmodulin. Binding of calmodulin results in conformational change that relieves intrasteric autoinhibition and allows autophosphorylation of Thr-286 which turns the kinase in a constitutively active form and confers to the kinase a Ca(2+)-independent activity. Its function is as follows. Calcium/calmodulin-dependent protein kinase that functions autonomously after Ca(2+)/calmodulin-binding and autophosphorylation, and is involved in various processes, such as synaptic plasticity, neurotransmitter release and long-term potentiation. Member of the NMDAR signaling complex in excitatory synapses, it regulates NMDAR-dependent potentiation of the AMPAR and therefore excitatory synaptic transmission. Regulates dendritic spine development. Also regulates the migration of developing neurons. Phosphorylates the transcription factor FOXO3 to activate its transcriptional activity. Phosphorylates the transcription factor ETS1 in response to calcium signaling, thereby decreasing ETS1 affinity for DNA. In response to interferon-gamma (IFN-gamma) stimulation, catalyzes phosphorylation of STAT1, stimulating the JAK-STAT signaling pathway. In response to interferon-beta (IFN-beta) stimulation, stimulates the JAK-STAT signaling pathway. Acts as a negative regulator of 2-arachidonoylglycerol (2-AG)-mediated synaptic signaling via modulation of DAGLA activity. Has no kinase activity. The polypeptide is Calcium/calmodulin-dependent protein kinase type II subunit alpha (Camk2a) (Mus musculus (Mouse)).